The following is a 98-amino-acid chain: MRALVEISDKQFFVTEGEKLFVPTQKAEAGDTLTFEKVLLQSDGAAASLSPSCKVTAKLLRHIKGDKVTVFKKKRRKRYRVTRGHRQGFSEIEILSVA.

Belongs to the bacterial ribosomal protein bL21 family. As to quaternary structure, part of the 50S ribosomal subunit. Contacts protein L20.

Its function is as follows. This protein binds to 23S rRNA in the presence of protein L20. The chain is Large ribosomal subunit protein bL21 from Chloroherpeton thalassium (strain ATCC 35110 / GB-78).